We begin with the raw amino-acid sequence, 545 residues long: EH domain-containing protein 1 (545 aa).

EF-hand domains lie at 14–49 and 50–83; these read ENQM…SNLP and RPEL…VSLA. In terms of domain architecture, EH spans 15–93; that stretch reads NQMIYKEWFE…QTGHEISHEV (79 aa). Ca(2+) is bound by residues Asp27, Asp29, Asp31, Arg33, Asp38, Asp61, Tyr67, and Glu72. The 236-residue stretch at 194 to 429 folds into the Dynamin-type G domain; sequence FDAKPMVMLL…DLLADLKDIP (236 aa). The segment at 204–211 is G1 motif; it reads GQYSTGKT. Position 204–211 (204–211) interacts with GTP; that stretch reads GQYSTGKT. Residues 230–231 form a G2 motif region; that stretch reads EP. Residues 292–295 are G3 motif; sequence DTPG. GTP contacts are provided by residues 309–313 and Lys359; that span reads DFTGV. The interval 358 to 361 is G4 motif; the sequence is NKAD. Residue Val382 is a region of interest, G5 motif. 395–398 is a GTP binding site; the sequence is SFSD. A coiled-coil region spans residues 467–490; sequence KAKAQQKLIDNLEDEFGKVQREHH.

This sequence belongs to the TRAFAC class dynamin-like GTPase superfamily. Dynamin/Fzo/YdjA family. EHD subfamily. As to quaternary structure, homooligomer, and heterooligomer with EHD2.

It localises to the endosome membrane. The protein localises to the cell membrane. The protein resides in the cytoplasm. It carries out the reaction GTP + H2O = GDP + phosphate + H(+). Its function is as follows. Involved in endocytosis positive regulation. Acts in early endocytic membrane fusion and membrane trafficking of recycling endosomes. Confers salt tolerance. The chain is EH domain-containing protein 1 from Arabidopsis thaliana (Mouse-ear cress).